The sequence spans 81 residues: Small ribosomal subunit protein bS16 (81 aa).

The protein belongs to the bacterial ribosomal protein bS16 family.

The sequence is that of Small ribosomal subunit protein bS16 from Caldicellulosiruptor saccharolyticus (strain ATCC 43494 / DSM 8903 / Tp8T 6331).